The sequence spans 531 residues: CTP synthase (531 aa).

The interval 1 to 267 is amidoligase domain; it reads MTKYIIITGG…ASKILSKLNL (267 aa). Ser-13 lines the CTP pocket. Ser-13 serves as a coordination point for UTP. An ATP-binding site is contributed by 14–19; it reads SVGKGT. Tyr-54 is a binding site for L-glutamine. Position 71 (Asp-71) interacts with ATP. Residues Asp-71 and Glu-141 each contribute to the Mg(2+) site. CTP is bound by residues 148-150, 188-193, and Lys-224; these read DIE and KTKPLQ. UTP contacts are provided by residues 188–193 and Lys-224; that span reads KTKPLQ. Residues 292 to 531 enclose the Glutamine amidotransferase type-1 domain; sequence KIALVGKYTK…IGFLRAAAGV (240 aa). Gly-355 serves as a coordination point for L-glutamine. The Nucleophile; for glutamine hydrolysis role is filled by Cys-382. Residues 383–386, Glu-406, and Arg-463 each bind L-glutamine; that span reads YGMQ. Residues His-507 and Glu-509 contribute to the active site.

It belongs to the CTP synthase family. As to quaternary structure, homotetramer.

It catalyses the reaction UTP + L-glutamine + ATP + H2O = CTP + L-glutamate + ADP + phosphate + 2 H(+). The enzyme catalyses L-glutamine + H2O = L-glutamate + NH4(+). It carries out the reaction UTP + NH4(+) + ATP = CTP + ADP + phosphate + 2 H(+). It participates in pyrimidine metabolism; CTP biosynthesis via de novo pathway; CTP from UDP: step 2/2. Its activity is regulated as follows. Allosterically activated by GTP, when glutamine is the substrate; GTP has no effect on the reaction when ammonia is the substrate. The allosteric effector GTP functions by stabilizing the protein conformation that binds the tetrahedral intermediate(s) formed during glutamine hydrolysis. Inhibited by the product CTP, via allosteric rather than competitive inhibition. Catalyzes the ATP-dependent amination of UTP to CTP with either L-glutamine or ammonia as the source of nitrogen. Regulates intracellular CTP levels through interactions with the four ribonucleotide triphosphates. This is CTP synthase from Sulfurisphaera tokodaii (strain DSM 16993 / JCM 10545 / NBRC 100140 / 7) (Sulfolobus tokodaii).